We begin with the raw amino-acid sequence, 1164 residues long: Nuclear exosome regulator NRDE2 (1164 aa).

Disordered regions lie at residues 1 to 25 and 39 to 149; these read MALF…ELDW and LSQQ…GHRF. An N-acetylalanine modification is found at alanine 2. Over residues 61–73 the composition is skewed to basic and acidic residues; the sequence is LKSESSDESDTNK. Residues 61-383 adopt a coiled-coil conformation; sequence LKSESSDESD…IESNQSSVDL (323 aa). Residues 74–103 show a composition bias toward basic residues; the sequence is KLKQTSRKKKKEKKKKRKHQHHKKTKRKHG. Residues 110–133 show a composition bias toward basic and acidic residues; sequence SETDTDSEKDKPSRGVGGSKKESE. The interval 163–266 is MID/MTR4-interacting domain; the sequence is FRTDKKPDPA…KDLEDAAPVT (104 aa). The disordered stretch occupies residues 279 to 305; sequence TTHWLQGQGPPEQESKQPDAQPDSESA. HAT repeat units lie at residues 305-337, 395-427, 758-792, 978-1010, and 1067-1101; these read AALK…FQDE, WEPS…FCQS, SQGK…LEWL, YPLA…IQNK, and GLMH…FLVS.

It belongs to the NRDE2 family. Interacts with MTREX; the interaction is direct and stabilizes NRDE2. Interacts with EXOSC10, EFTUD2 and EIF4A3.

The protein localises to the nucleus speckle. It is found in the nucleus. Its subcellular location is the nucleolus. The protein resides in the nucleoplasm. Its function is as follows. Protein of the nuclear speckles that regulates RNA degradation and export from the nucleus through its interaction with MTREX an essential factor directing various RNAs to exosomal degradation. Changes the conformation of MTREX, precluding its association with the nuclear exosome and interaction with proteins required for its function in RNA exosomal degradation. Negatively regulates, for instance, the degradation of mRNAs and lncRNAs by inhibiting their MTREX-mediated recruitment to nuclear exosome. By preventing the degradation of RNAs in the nucleus, it promotes their export to the cytoplasm. U5 snRNP-associated RNA splicing factor which is required for efficient splicing of CEP131 pre-mRNA and plays an important role in centrosome maturation, integrity and function during mitosis. Suppresses intron retention in a subset of pre-mRNAs containing short, GC-rich introns with relatively weak 5' and 3' splice sites. Plays a role in DNA damage response. This chain is Nuclear exosome regulator NRDE2, found in Homo sapiens (Human).